The following is a 102-amino-acid chain: Small ribosomal subunit protein uS10 (102 aa).

Belongs to the universal ribosomal protein uS10 family. Part of the 30S ribosomal subunit.

Involved in the binding of tRNA to the ribosomes. This is Small ribosomal subunit protein uS10 from Trichlorobacter lovleyi (strain ATCC BAA-1151 / DSM 17278 / SZ) (Geobacter lovleyi).